The sequence spans 153 residues: uncharacterized protein (153 aa).

The first 22 residues, 1 to 22 (MKMLKKGTAVLFVMIMAVMLVA), serve as a signal peptide directing secretion. Cysteine 23 carries the N-palmitoyl cysteine lipid modification. Residue cysteine 23 is the site of S-diacylglycerol cysteine attachment. Residues 117 to 153 (DMNKIPGMSSNGDTSKGISMEESAKMLESQGYKEVSK) are disordered. The span at 124 to 133 (MSSNGDTSKG) shows a compositional bias: polar residues.

To E.coli YehR.

Its subcellular location is the cell membrane. This is an uncharacterized protein from Listeria monocytogenes serovar 1/2a (strain ATCC BAA-679 / EGD-e).